The following is a 617-amino-acid chain: DNA-(apurinic or apyrimidinic site) endonuclease (617 aa).

The segment at 74 to 99 (IKNSDEQNNSNNNNNNSSSSNFCSNN) is disordered. The segment covering 81–99 (NNSNNNNNNSSSSNFCSNN) has biased composition (low complexity). Residues Asn284 and Glu317 each coordinate Mg(2+). A disordered region spans residues 326 to 349 (SEPCDNKNKNKNKNDGIRDRGKIK). Basic and acidic residues predominate over residues 329–349 (CDNKNKNKNKNDGIRDRGKIK). Mg(2+) is bound by residues Asp474, Asn476, Asp606, and His607. His607 (proton acceptor) is an active-site residue.

This sequence belongs to the DNA repair enzymes AP/ExoA family. The cofactor is Mg(2+). Requires Mn(2+) as cofactor. May be proteolytically cleaved into a 64 kDa form.

It localises to the mitochondrion. It catalyses the reaction Exonucleolytic cleavage in the 3'- to 5'-direction to yield nucleoside 5'-phosphates.. Its activity is regulated as follows. Apurinic/apyrimidinic (AP) endonuclease activity is maximal at low Mg(2+) (0.5-2 mM) with no activity seen at high concentrations (more than 10 mM). 3'-5' exonuclease activity is maximal in the range of 0.5-2 mM Mg(2+) with activity seen up to 10 mM Mg(2+). In terms of biological role, multifunctional protein that plays a central role in mitochondrial DNA base excision repair (BER) pathway induced by oxidative stress. Has apurinic/apyrimidinic (AP) endonuclease activity towards double-stranded DNA (dsDNA). Has nucleotide incision repair (NIR) activity; acts on dsDNA with oxidized bases thymine glycol and 5,6-dihydro-2'-deoxyuridine. Has 3'-5' exonuclease; can use dsDNA templates with 3'-OH termini including blunt-end, gapped and mismatched 3'-recessed. Has 3'-phosphatase activity; cleaves 3'-phosphate from blunt, recessed and gapped dsDNA templates, followed by 3'-5' exonuclease activity. Has RNase H-like activity; cleaves RNA on 3'-recessed RNA-DNA duplex. Plays a role in merosome infection of host erythrocytes. The chain is DNA-(apurinic or apyrimidinic site) endonuclease from Plasmodium falciparum (isolate 3D7).